The sequence spans 336 residues: Glycerol-3-phosphate dehydrogenase [NAD(P)+] (336 aa).

Ser11, Trp12, Arg32, Arg33, and Lys110 together coordinate NADPH. Sn-glycerol 3-phosphate-binding residues include Lys110 and Gly140. An NADPH-binding site is contributed by Ala144. Residues Lys195, Asp248, Ser258, Arg259, and Asn260 each contribute to the sn-glycerol 3-phosphate site. The active-site Proton acceptor is Lys195. Residue Arg259 participates in NADPH binding. Residues Val284 and Glu286 each coordinate NADPH.

The protein belongs to the NAD-dependent glycerol-3-phosphate dehydrogenase family.

It is found in the cytoplasm. The catalysed reaction is sn-glycerol 3-phosphate + NAD(+) = dihydroxyacetone phosphate + NADH + H(+). It catalyses the reaction sn-glycerol 3-phosphate + NADP(+) = dihydroxyacetone phosphate + NADPH + H(+). It participates in membrane lipid metabolism; glycerophospholipid metabolism. Functionally, catalyzes the reduction of the glycolytic intermediate dihydroxyacetone phosphate (DHAP) to sn-glycerol 3-phosphate (G3P), the key precursor for phospholipid synthesis. The sequence is that of Glycerol-3-phosphate dehydrogenase [NAD(P)+] from Nocardia farcinica (strain IFM 10152).